Reading from the N-terminus, the 326-residue chain is Putative ubiquitin-conjugating enzyme E2 38 (326 aa).

Residues N54–V214 form the UBC core domain. The Glycyl thioester intermediate role is filled by C140. Residues L297 to R326 form a disordered region. Basic residues predominate over residues K315 to R326.

This sequence belongs to the ubiquitin-conjugating enzyme family.

It carries out the reaction S-ubiquitinyl-[E1 ubiquitin-activating enzyme]-L-cysteine + [E2 ubiquitin-conjugating enzyme]-L-cysteine = [E1 ubiquitin-activating enzyme]-L-cysteine + S-ubiquitinyl-[E2 ubiquitin-conjugating enzyme]-L-cysteine.. The protein operates within protein modification; protein ubiquitination. Functionally, accepts the ubiquitin from the E1 complex and catalyzes its covalent attachment to other proteins. In Arabidopsis thaliana (Mouse-ear cress), this protein is Putative ubiquitin-conjugating enzyme E2 38 (UBC38).